We begin with the raw amino-acid sequence, 436 residues long: 5-hydroxytryptamine receptor 6 (436 aa).

Over 1–27 the chain is Extracellular; sequence MVPEPGPVNSSTPAWGPGPPPAPGGSG. Asn-9 carries N-linked (GlcNAc...) asparagine glycosylation. Residues 28-52 form a helical membrane-spanning segment; sequence WVAAALCVVIVLTAAANSLLIVLIC. The Cytoplasmic segment spans residues 53 to 62; it reads TQPALRNTSN. Residues 63-88 traverse the membrane as a helical segment; sequence FFLVSLFTSDLMVGLVVMPPAMLNAL. Topologically, residues 89–96 are extracellular; that stretch reads YGRWVLAR. The chain crosses the membrane as a helical span at residues 97-122; sequence GLCLLWTAFDVMCCSASILNLCLISL. A disulfide bridge connects residues Cys-99 and Cys-180. A serotonin-binding site is contributed by Asp-106. Residues 123 to 142 lie on the Cytoplasmic side of the membrane; it reads DRYLLILSPLRYKLRMTAPR. A helical membrane pass occupies residues 143–167; it reads ALALILGAWSLAALASFLPLLLGWH. Residues 168 to 185 lie on the Extracellular side of the membrane; sequence ELGKARTPAPGQCRLLAS. The helical transmembrane segment at 186–209 threads the bilayer; sequence LPFVLVASGVTFFLPSGAICFTYC. The Cytoplasmic segment spans residues 210 to 266; it reads RILLAARKQAVQVASLTTGTAGQALETLQVPRTPRPGMESADSRRLATKHSRKALKA. The helical transmembrane segment at 267-293 threads the bilayer; the sequence is SLTLGILLGMFFVTWLPFFVANIAQAV. Position 288 (Asn-288) interacts with serotonin. Topologically, residues 294–299 are extracellular; that stretch reads CDCISP. A helical membrane pass occupies residues 300–323; the sequence is GLFDVLTWLGYCNSTMNPIIYPLF. Residues 324–436 are Cytoplasmic-facing; it reads MRDFKRALGR…RYGRIHSVPP (113 aa).

This sequence belongs to the G-protein coupled receptor 1 family. Interacts with MTOR, RPTOR and NF1. Interacts with CDK5. In terms of tissue distribution, localized exclusively in the central nervous system, predominantly in the corpus striatum but also in various limbic and cortical regions.

Its subcellular location is the cell membrane. Functionally, G-protein coupled receptor for 5-hydroxytryptamine (serotonin), a biogenic hormone that functions as a neurotransmitter, a hormone and a mitogen. Also has a high affinity for tricyclic psychotropic drugs. Ligand binding causes a conformation change that triggers signaling via guanine nucleotide-binding proteins (G proteins) and modulates the activity of downstream effectors. HTR6 is coupled to G(s) G alpha proteins and mediates activation of adenylate cyclase activity. Controls pyramidal neurons migration during corticogenesis, through the regulation of CDK5 activity. Is an activator of mTOR signaling. The polypeptide is 5-hydroxytryptamine receptor 6 (Htr6) (Rattus norvegicus (Rat)).